Here is a 235-residue protein sequence, read N- to C-terminus: (5-formylfuran-3-yl)methyl phosphate synthase (235 aa).

Catalysis depends on K27, which acts as the Schiff-base intermediate with substrate. K85 functions as the Proton acceptor in the catalytic mechanism.

This sequence belongs to the MfnB family.

The enzyme catalyses 2 D-glyceraldehyde 3-phosphate = 4-(hydroxymethyl)-2-furancarboxaldehyde phosphate + phosphate + 2 H2O. Its pathway is cofactor biosynthesis; methanofuran biosynthesis. Its function is as follows. Catalyzes the formation of 4-(hydroxymethyl)-2-furancarboxaldehyde phosphate (4-HFC-P) from two molecules of glyceraldehyde-3-P (GA-3-P). The sequence is that of (5-formylfuran-3-yl)methyl phosphate synthase from Methanococcus aeolicus (strain ATCC BAA-1280 / DSM 17508 / OCM 812 / Nankai-3).